Reading from the N-terminus, the 2643-residue chain is Ankyrin repeat domain-containing protein 11 (2643 aa).

Disordered stretches follow at residues Met-1–Val-90 and Ser-128–Thr-170. 2 stretches are compositionally biased toward basic and acidic residues: residues Met-21 to Arg-54 and Glu-69 to Val-90. The segment covering Ser-128 to Ser-155 has biased composition (polar residues). The segment covering Lys-156–Thr-170 has biased composition (basic and acidic residues). ANK repeat units lie at residues Arg-167 to Val-196, Ala-200 to Thr-229, Asp-233 to Gln-262, and Lys-266 to Ser-292. Ser-276 is subject to Phosphoserine. The interval Tyr-289 to His-365 is disordered. Over residues Ser-295–Ala-305 the composition is skewed to acidic residues. Polar residues predominate over residues Ala-309–Asp-320. Composition is skewed to basic and acidic residues over residues Glu-322–Glu-335 and Asp-356–His-365. Ser-408 is modified (phosphoserine). Thr-410 is subject to Phosphothreonine. A Phosphoserine modification is found at Ser-411. 3 disordered regions span residues Gly-423 to Gly-504, Ser-517 to Ser-651, and Asp-727 to Lys-805. Over residues Lys-438–Lys-451 the composition is skewed to basic and acidic residues. Residues Asn-452 to Thr-462 are compositionally biased toward basic residues. Residues Lys-463 to Lys-475 show a composition bias toward basic and acidic residues. Positions Glu-484–Asp-494 are enriched in acidic residues. The span at Ser-517–Ser-528 shows a compositional bias: low complexity. The span at Gly-537–Asn-550 shows a compositional bias: basic and acidic residues. The segment covering Pro-557–Thr-574 has biased composition (polar residues). Residues Ser-575 to Ser-588 are compositionally biased toward low complexity. Basic residues-rich tracts occupy residues Pro-591–Gly-602 and Val-633–Glu-646. Residue Ser-838 is modified to Phosphoserine. Composition is skewed to basic and acidic residues over residues Lys-918 to Lys-931 and Ser-938 to Glu-962. Disordered stretches follow at residues Lys-918–Glu-962, Ser-977–Asp-1037, and Glu-1051–Leu-1074. Ser-1070 is modified (phosphoserine). Thr-1111 carries the phosphothreonine modification. Phosphoserine is present on Ser-1114. 2 disordered regions span residues Ser-1114 to Ser-1388 and Leu-1420 to Cys-1711. Composition is skewed to basic and acidic residues over residues Asp-1133–Ser-1297, Ala-1326–Lys-1343, Lys-1355–Ser-1388, Leu-1420–Lys-1444, Arg-1464–Ser-1535, Val-1546–Gly-1564, Leu-1577–Arg-1587, and Met-1595–Glu-1640. Residue Ser-1676 is modified to Phosphoserine. Residues Arg-1678–Ser-1695 show a composition bias toward polar residues. A phosphoserine mark is found at Ser-1777 and Ser-1832. A phosphotyrosine mark is found at Tyr-1835 and Tyr-1836. Phosphoserine occurs at positions 1837 and 1844. 3 disordered regions span residues Pro-1863–Leu-1900, Ser-1981–Asp-2027, and His-2111–Gln-2386. A phosphoserine mark is found at Ser-1981 and Ser-2139. Pro residues-rich tracts occupy residues Pro-2150–Pro-2160 and Glu-2175–Glu-2184. A compositionally biased stretch (low complexity) spans Ser-2273–Glu-2284. The span at Pro-2297–Pro-2315 shows a compositional bias: basic and acidic residues. An important for protein degradation region spans residues Ala-2349–Ala-2643. The segment covering Arg-2371–Gln-2386 has biased composition (low complexity).

As to quaternary structure, interacts with the PAS region of the p160 coactivators. Subject to proteasomal degradation which is probably essential to regulate its activity.

The protein resides in the nucleus. Functionally, chromatin regulator which modulates histone acetylation and gene expression in neural precursor cells. May recruit histone deacetylases (HDACs) to the p160 coactivators/nuclear receptor complex to inhibit ligand-dependent transactivation. Has a role in proliferation and development of cortical neural precursors. May also regulate bone homeostasis. The sequence is that of Ankyrin repeat domain-containing protein 11 from Mus musculus (Mouse).